The chain runs to 339 residues: Ketol-acid reductoisomerase (NADP(+)) (339 aa).

Positions 1–182 (MRVYYDRDAD…GGGRSGIIET (182 aa)) constitute a KARI N-terminal Rossmann domain. NADP(+) is bound by residues 24 to 27 (YGSQ), lysine 48, serine 51, threonine 53, and 83 to 86 (DELQ). Residue histidine 108 is part of the active site. NADP(+) is bound at residue glycine 134. Residues 183-328 (TFQEECETDL…AKLRGMMPWI (146 aa)) form the KARI C-terminal knotted domain. Positions 191, 195, 227, and 231 each coordinate Mg(2+). Serine 252 serves as a coordination point for substrate.

Belongs to the ketol-acid reductoisomerase family. Mg(2+) is required as a cofactor.

It catalyses the reaction (2R)-2,3-dihydroxy-3-methylbutanoate + NADP(+) = (2S)-2-acetolactate + NADPH + H(+). It carries out the reaction (2R,3R)-2,3-dihydroxy-3-methylpentanoate + NADP(+) = (S)-2-ethyl-2-hydroxy-3-oxobutanoate + NADPH + H(+). It functions in the pathway amino-acid biosynthesis; L-isoleucine biosynthesis; L-isoleucine from 2-oxobutanoate: step 2/4. Its pathway is amino-acid biosynthesis; L-valine biosynthesis; L-valine from pyruvate: step 2/4. In terms of biological role, involved in the biosynthesis of branched-chain amino acids (BCAA). Catalyzes an alkyl-migration followed by a ketol-acid reduction of (S)-2-acetolactate (S2AL) to yield (R)-2,3-dihydroxy-isovalerate. In the isomerase reaction, S2AL is rearranged via a Mg-dependent methyl migration to produce 3-hydroxy-3-methyl-2-ketobutyrate (HMKB). In the reductase reaction, this 2-ketoacid undergoes a metal-dependent reduction by NADPH to yield (R)-2,3-dihydroxy-isovalerate. The polypeptide is Ketol-acid reductoisomerase (NADP(+)) (Allorhizobium ampelinum (strain ATCC BAA-846 / DSM 112012 / S4) (Agrobacterium vitis (strain S4))).